Here is a 431-residue protein sequence, read N- to C-terminus: 3-isopropylmalate dehydratase large subunit (431 aa).

3 residues coordinate [4Fe-4S] cluster: Cys-300, Cys-360, and Cys-363.

Belongs to the aconitase/IPM isomerase family. LeuC type 2 subfamily. As to quaternary structure, heterodimer of LeuC and LeuD. It depends on [4Fe-4S] cluster as a cofactor.

The enzyme catalyses (2R,3S)-3-isopropylmalate = (2S)-2-isopropylmalate. It participates in amino-acid biosynthesis; L-leucine biosynthesis; L-leucine from 3-methyl-2-oxobutanoate: step 2/4. In terms of biological role, catalyzes the isomerization between 2-isopropylmalate and 3-isopropylmalate, via the formation of 2-isopropylmaleate. The protein is 3-isopropylmalate dehydratase large subunit of Sulfurihydrogenibium sp. (strain YO3AOP1).